A 423-amino-acid chain; its full sequence is Glutamate-1-semialdehyde 2,1-aminomutase (423 aa).

Lysine 262 carries the post-translational modification N6-(pyridoxal phosphate)lysine.

It belongs to the class-III pyridoxal-phosphate-dependent aminotransferase family. HemL subfamily. In terms of assembly, homodimer. It depends on pyridoxal 5'-phosphate as a cofactor.

It localises to the cytoplasm. The enzyme catalyses (S)-4-amino-5-oxopentanoate = 5-aminolevulinate. It participates in porphyrin-containing compound metabolism; protoporphyrin-IX biosynthesis; 5-aminolevulinate from L-glutamyl-tRNA(Glu): step 2/2. The polypeptide is Glutamate-1-semialdehyde 2,1-aminomutase (Campylobacter fetus subsp. fetus (strain 82-40)).